The sequence spans 236 residues: Pyridoxine 5'-phosphate synthase (236 aa).

Residue N6 coordinates 3-amino-2-oxopropyl phosphate. 8 to 9 is a 1-deoxy-D-xylulose 5-phosphate binding site; that stretch reads DH. Residue R17 participates in 3-amino-2-oxopropyl phosphate binding. Catalysis depends on H42, which acts as the Proton acceptor. 2 residues coordinate 1-deoxy-D-xylulose 5-phosphate: R44 and H49. Catalysis depends on E69, which acts as the Proton acceptor. T99 is a 1-deoxy-D-xylulose 5-phosphate binding site. The active-site Proton donor is H190. 3-amino-2-oxopropyl phosphate-binding positions include G191 and 212 to 213; that span reads GH.

Belongs to the PNP synthase family. As to quaternary structure, homooctamer; tetramer of dimers.

It is found in the cytoplasm. It carries out the reaction 3-amino-2-oxopropyl phosphate + 1-deoxy-D-xylulose 5-phosphate = pyridoxine 5'-phosphate + phosphate + 2 H2O + H(+). The protein operates within cofactor biosynthesis; pyridoxine 5'-phosphate biosynthesis; pyridoxine 5'-phosphate from D-erythrose 4-phosphate: step 5/5. In terms of biological role, catalyzes the complicated ring closure reaction between the two acyclic compounds 1-deoxy-D-xylulose-5-phosphate (DXP) and 3-amino-2-oxopropyl phosphate (1-amino-acetone-3-phosphate or AAP) to form pyridoxine 5'-phosphate (PNP) and inorganic phosphate. In Chlorobium phaeobacteroides (strain DSM 266 / SMG 266 / 2430), this protein is Pyridoxine 5'-phosphate synthase.